Reading from the N-terminus, the 332-residue chain is BRISC and BRCA1-A complex member 1 (332 aa).

Met-1 is modified (N-acetylmethionine). The interval 1 to 88 is disordered; sequence MEVAEPSCPT…PPPAPEVQVR (88 aa). Positions 10-23 are enriched in acidic residues; that stretch reads TEEEEEEEEEEEQS. Phosphoserine occurs at positions 32, 52, and 60. Positions 70–83 are enriched in pro residues; the sequence is GAGPKPWQVPPPAP. Residues 98 to 301 form a VWFA-like region; the sequence is VIICLDLSEE…LELHNCMAKL (204 aa).

Belongs to the BABAM1 family. As to quaternary structure, component of the ARISC complex, at least composed of UIMC1/RAP80, ABRAXAS1, BRCC3/BRCC36, BABAM2 and BABAM1/NBA1. Component of the BRCA1-A complex, at least composed of BRCA1, BARD1, UIMC1/RAP80, ABRAXAS1, BRCC3/BRCC36, BABAM2 and BABAM1/NBA1. In the BRCA1-A complex, interacts directly with ABRAXAS1 and BABAM2. Component of the BRISC complex, at least composed of ABRAXAS2, BRCC3/BRCC36, BABAM2 and BABAM1/NBA1. Identified in a complex with SHMT2 and the other subunits of the BRISC complex.

It is found in the cytoplasm. Its subcellular location is the nucleus. Its function is as follows. Component of the BRCA1-A complex, a complex that specifically recognizes 'Lys-63'-linked ubiquitinated histones H2A and H2AX at DNA lesions sites, leading to target the BRCA1-BARD1 heterodimer to sites of DNA damage at double-strand breaks (DSBs). The BRCA1-A complex also possesses deubiquitinase activity that specifically removes 'Lys-63'-linked ubiquitin on histones H2A and H2AX. In the BRCA1-A complex, it is required for the complex integrity and its localization at DSBs. Component of the BRISC complex, a multiprotein complex that specifically cleaves 'Lys-63'-linked ubiquitin in various substrates. In these 2 complexes, it is probably required to maintain the stability of BABAM2 and help the 'Lys-63'-linked deubiquitinase activity mediated by BRCC3/BRCC36 component. The BRISC complex is required for normal mitotic spindle assembly and microtubule attachment to kinetochores via its role in deubiquitinating NUMA1. Plays a role in interferon signaling via its role in the deubiquitination of the interferon receptor IFNAR1; deubiquitination increases IFNAR1 activity by enhancing its stability and cell surface expression. Down-regulates the response to bacterial lipopolysaccharide (LPS) via its role in IFNAR1 deubiquitination. The chain is BRISC and BRCA1-A complex member 1 (BABAM1) from Bos taurus (Bovine).